A 214-amino-acid chain; its full sequence is Neuromodulin (214 aa).

The segment at 1-214 (MLCCMRRTKQ…EEAKPDQENA (214 aa)) is disordered. Residues C3 and C4 are each lipidated (S-palmitoyl cysteine). Composition is skewed to basic and acidic residues over residues 9–33 (KQVE…DKAH), 52–88 (MKDD…KTEE), and 95–122 (LEVK…KDTP). The region spanning 32-61 (AHKAATKIQASFRGHIIRKKMKDDKKDDNS) is the IQ domain. The segment covering 124–133 (EENQASAESE) has biased composition (low complexity). Basic and acidic residues-rich tracts occupy residues 150-160 (QAKEESKKADV), 168-193 (ASEK…EIKA), and 205-214 (EEAKPDQENA).

Belongs to the neuromodulin family. As to quaternary structure, binds calmodulin with a greater affinity in the absence of Ca(2+) than in its presence. Post-translationally, palmitoylated. Palmitoylation is essential for plasma membrane association.

The protein localises to the cell membrane. The protein resides in the cell projection. It localises to the growth cone membrane. It is found in the synapse. Its subcellular location is the filopodium membrane. This protein is associated with nerve growth. It is a major component of the motile 'growth cones' that form the tips of elongating axons. Plays a role in axonal and dendritic filopodia induction. This is Neuromodulin (gap43) from Xenopus laevis (African clawed frog).